We begin with the raw amino-acid sequence, 316 residues long: MQILLANPRGFCAGVDRAISIVENALAIYGAPIYVRHEVVHNRYVVDSLRKRGAIFIEQISEVPDGAILIFSAHGVSQAVRNEAKSRDLTVFDATCPLVTKVHMEVARASRRGEESILIGHAGHPEVEGTMGQYSNPEGGMFLVESPEDVWTLNVKNEGKLSFMTQTTLSVDDTSDVIDALRKRFPKIVGPRKDDICYATTNRQEAVRALAEQADVVLVVGSKNSSNSNRLAELAQRMGRTAFLIDDAADIQEAWVKDAACVGVTAGASAPDILVQNVIARLREFGGGEAVTLEGREENIVFEVPKELRVDVREVE.

Residue Cys12 participates in [4Fe-4S] cluster binding. Residues His41 and His74 each coordinate (2E)-4-hydroxy-3-methylbut-2-enyl diphosphate. The dimethylallyl diphosphate site is built by His41 and His74. Isopentenyl diphosphate contacts are provided by His41 and His74. Cys96 contributes to the [4Fe-4S] cluster binding site. His124 lines the (2E)-4-hydroxy-3-methylbut-2-enyl diphosphate pocket. Residue His124 coordinates dimethylallyl diphosphate. Position 124 (His124) interacts with isopentenyl diphosphate. Catalysis depends on Glu126, which acts as the Proton donor. Thr167 contributes to the (2E)-4-hydroxy-3-methylbut-2-enyl diphosphate binding site. Position 197 (Cys197) interacts with [4Fe-4S] cluster. The (2E)-4-hydroxy-3-methylbut-2-enyl diphosphate site is built by Ser225, Ser226, Asn227, and Ser269. Positions 225, 226, 227, and 269 each coordinate dimethylallyl diphosphate. The isopentenyl diphosphate site is built by Ser225, Ser226, Asn227, and Ser269.

This sequence belongs to the IspH family. As to quaternary structure, homodimer. It depends on [4Fe-4S] cluster as a cofactor.

It carries out the reaction isopentenyl diphosphate + 2 oxidized [2Fe-2S]-[ferredoxin] + H2O = (2E)-4-hydroxy-3-methylbut-2-enyl diphosphate + 2 reduced [2Fe-2S]-[ferredoxin] + 2 H(+). It catalyses the reaction dimethylallyl diphosphate + 2 oxidized [2Fe-2S]-[ferredoxin] + H2O = (2E)-4-hydroxy-3-methylbut-2-enyl diphosphate + 2 reduced [2Fe-2S]-[ferredoxin] + 2 H(+). It participates in isoprenoid biosynthesis; dimethylallyl diphosphate biosynthesis; dimethylallyl diphosphate from (2E)-4-hydroxy-3-methylbutenyl diphosphate: step 1/1. Its pathway is isoprenoid biosynthesis; isopentenyl diphosphate biosynthesis via DXP pathway; isopentenyl diphosphate from 1-deoxy-D-xylulose 5-phosphate: step 6/6. In terms of biological role, catalyzes the conversion of 1-hydroxy-2-methyl-2-(E)-butenyl 4-diphosphate (HMBPP) into a mixture of isopentenyl diphosphate (IPP) and dimethylallyl diphosphate (DMAPP). Acts in the terminal step of the DOXP/MEP pathway for isoprenoid precursor biosynthesis. This is 4-hydroxy-3-methylbut-2-enyl diphosphate reductase from Salmonella paratyphi A (strain ATCC 9150 / SARB42).